We begin with the raw amino-acid sequence, 380 residues long: MEPAIKYRLIKKEKHTGARLGEIVTPHGTFKTPMFMPVGTQASVKTMAPEDLKEMGAGIILSNTYHLWLRPGEDIVEKAGGLHKFMNWDRGVLTDSGGFQVFSLAKLRDISEEGVAFKSHLNGEKLFLSPEKAIHVENALGADIMMSFDECPPFFESYDYVKKSVERTSRWAERGLIAHQNPATQGLFGIVQGAGFEDLRRQSARDLVGMDFPGYSIGGLSVGESKGEMNRVLDFTTPMLPEDKPRYLMGVGSPDALIDGVIRGVDMFDCVLPTRIARNGTTMTSQGRLVVKNAKYSEDFRPLDPKCDCYVCKNYTRAYIRHLIKADETFGIHLTSYHNLYFLINLMHQVQDAIEQDNLLEFREAFFEEYGYNENNGRNF.

Catalysis depends on aspartate 95, which acts as the Proton acceptor. Substrate is bound by residues 95–99 (DSGGF), aspartate 149, glutamine 192, and glycine 219. Positions 250–256 (GVGSPDA) are RNA binding. Catalysis depends on aspartate 269, which acts as the Nucleophile. The RNA binding; important for wobble base 34 recognition stretch occupies residues 274 to 278 (TRIAR). Residues cysteine 307, cysteine 309, cysteine 312, and histidine 338 each coordinate Zn(2+).

It belongs to the queuine tRNA-ribosyltransferase family. Homodimer. Within each dimer, one monomer is responsible for RNA recognition and catalysis, while the other monomer binds to the replacement base PreQ1. The cofactor is Zn(2+).

It carries out the reaction 7-aminomethyl-7-carbaguanine + guanosine(34) in tRNA = 7-aminomethyl-7-carbaguanosine(34) in tRNA + guanine. The protein operates within tRNA modification; tRNA-queuosine biosynthesis. Its function is as follows. Catalyzes the base-exchange of a guanine (G) residue with the queuine precursor 7-aminomethyl-7-deazaguanine (PreQ1) at position 34 (anticodon wobble position) in tRNAs with GU(N) anticodons (tRNA-Asp, -Asn, -His and -Tyr). Catalysis occurs through a double-displacement mechanism. The nucleophile active site attacks the C1' of nucleotide 34 to detach the guanine base from the RNA, forming a covalent enzyme-RNA intermediate. The proton acceptor active site deprotonates the incoming PreQ1, allowing a nucleophilic attack on the C1' of the ribose to form the product. After dissociation, two additional enzymatic reactions on the tRNA convert PreQ1 to queuine (Q), resulting in the hypermodified nucleoside queuosine (7-(((4,5-cis-dihydroxy-2-cyclopenten-1-yl)amino)methyl)-7-deazaguanosine). The chain is Queuine tRNA-ribosyltransferase from Latilactobacillus sakei subsp. sakei (strain 23K) (Lactobacillus sakei subsp. sakei).